Consider the following 91-residue polypeptide: MEAALEQHLEDTMKNPSIVGVLCTDSQGLSLGCCGSLSDKHAGVISILPQYAAKLTSDPTDVPVVCLESDNGIVMIQKHDHLTVAVHKVTS.

Belongs to the LAMTOR5 family. As to quaternary structure, part of the Ragulator complex composed of lamtor1, lamtor2, lamtor3, lamtor4 and lamtor5. The Ragulator complex interacts with slc38a9; the probable amino acid sensor. Component of the lysosomal folliculin complex (LFC).

It is found in the cytoplasm. The protein localises to the lysosome. As part of the Ragulator complex it is involved in amino acid sensing and activation of mTORC1, a signaling complex promoting cell growth in response to growth factors, energy levels, and amino acids. Activated by amino acids through a mechanism involving the lysosomal V-ATPase, the Ragulator plays a dual role for the small GTPases Rag (RagA/RRAGA, RagB/RRAGB, RagC/RRAGC and/or RagD/RRAGD): it (1) acts as a guanine nucleotide exchange factor (GEF), activating the small GTPases Rag and (2) mediates recruitment of Rag GTPases to the lysosome membrane. Activated Ragulator and Rag GTPases function as a scaffold recruiting mTORC1 to lysosomes where it is in turn activated. The protein is Ragulator complex protein LAMTOR5 (lamtor5) of Xenopus tropicalis (Western clawed frog).